The primary structure comprises 79 residues: MSIEETVIELFDRLFMEDVSEMMDEDLFDAGVLDSLGTVELIVELESTFNIKVPISEFGRDDWNTVTKIVQGVEELQHA.

In terms of domain architecture, Carrier spans 1–77 (MSIEETVIEL…KIVQGVEELQ (77 aa)). O-(pantetheine 4'-phosphoryl)serine is present on serine 35.

Belongs to the DltC family. Post-translationally, 4'-phosphopantetheine is transferred from CoA to a specific serine of apo-DCP.

Its subcellular location is the cytoplasm. Its pathway is cell wall biogenesis; lipoteichoic acid biosynthesis. Functionally, carrier protein involved in the D-alanylation of lipoteichoic acid (LTA). The loading of thioester-linked D-alanine onto DltC is catalyzed by D-alanine--D-alanyl carrier protein ligase DltA. The DltC-carried D-alanyl group is further transferred to cell membrane phosphatidylglycerol (PG) by forming an ester bond, probably catalyzed by DltD. D-alanylation of LTA plays an important role in modulating the properties of the cell wall in Gram-positive bacteria, influencing the net charge of the cell wall. The sequence is that of D-alanyl carrier protein from Streptococcus pyogenes serotype M1.